The chain runs to 276 residues: Shikimate dehydrogenase (NADP(+)) (276 aa).

Residues 18–20 (SRS) and Thr-65 each bind shikimate. The Proton acceptor role is filled by Lys-69. Positions 90 and 106 each coordinate shikimate. NADP(+) contacts are provided by residues 132–136 (GAGGA) and Ile-221. Residue Tyr-223 coordinates shikimate. Gly-244 contributes to the NADP(+) binding site.

This sequence belongs to the shikimate dehydrogenase family. In terms of assembly, homodimer.

The enzyme catalyses shikimate + NADP(+) = 3-dehydroshikimate + NADPH + H(+). It functions in the pathway metabolic intermediate biosynthesis; chorismate biosynthesis; chorismate from D-erythrose 4-phosphate and phosphoenolpyruvate: step 4/7. Its function is as follows. Involved in the biosynthesis of the chorismate, which leads to the biosynthesis of aromatic amino acids. Catalyzes the reversible NADPH linked reduction of 3-dehydroshikimate (DHSA) to yield shikimate (SA). The sequence is that of Shikimate dehydrogenase (NADP(+)) from Paramagnetospirillum magneticum (strain ATCC 700264 / AMB-1) (Magnetospirillum magneticum).